Here is a 498-residue protein sequence, read N- to C-terminus: Ribose import ATP-binding protein RbsA (498 aa).

ABC transporter domains are found at residues 2-237 (LALQ…VGRD) and 247-491 (VTPG…TGQQ). Position 34–41 (34–41 (GENGAGKS)) interacts with ATP.

It belongs to the ABC transporter superfamily. Ribose importer (TC 3.A.1.2.1) family. The complex is composed of an ATP-binding protein (RbsA), two transmembrane proteins (RbsC) and a solute-binding protein (RbsB).

The protein localises to the cell membrane. The catalysed reaction is D-ribose(out) + ATP + H2O = D-ribose(in) + ADP + phosphate + H(+). Part of the ABC transporter complex RbsABC involved in ribose import. Responsible for energy coupling to the transport system. This Deinococcus geothermalis (strain DSM 11300 / CIP 105573 / AG-3a) protein is Ribose import ATP-binding protein RbsA.